We begin with the raw amino-acid sequence, 197 residues long: Recombination protein RecR (197 aa).

Residues 56–71 (CQRCHSFSDEAVCPLC) form a C4-type zinc finger. The 96-residue stretch at 79 to 174 (TLLCVVETAA…KVTRLAQGVP (96 aa)) folds into the Toprim domain.

It belongs to the RecR family.

May play a role in DNA repair. It seems to be involved in an RecBC-independent recombinational process of DNA repair. It may act with RecF and RecO. The chain is Recombination protein RecR from Psychrobacter cryohalolentis (strain ATCC BAA-1226 / DSM 17306 / VKM B-2378 / K5).